The following is a 270-amino-acid chain: DNA repair protein RecO (270 aa).

It belongs to the RecO family.

Involved in DNA repair and RecF pathway recombination. The sequence is that of DNA repair protein RecO from Synechococcus sp. (strain WH7803).